The following is a 322-amino-acid chain: Chemokine XC receptor 1 (322 aa).

Topologically, residues 1-27 (MESSTAFYDYHDKLSLLCENNVIFFST) are extracellular. A helical membrane pass occupies residues 28–55 (ISTIVLYSLVFLLSLVGNSLVLWVLVKY). The Cytoplasmic portion of the chain corresponds to 56-65 (ENLESLTNIF). Residues 66 to 85 (ILNLCLSDLMFSCLLPVLIS) form a helical membrane-spanning segment. Topologically, residues 86-98 (AQWSWFLGDFFCK) are extracellular. Cys-97 and Cys-170 are disulfide-bonded. A helical transmembrane segment spans residues 99–120 (FFNMIFGISLYSSIFFLTIMTI). Topologically, residues 121-137 (HRYLSVVSPISTLGIHT) are cytoplasmic. The helical transmembrane segment at 138 to 162 (LRCRVLVTSCVWAASILFSIPDAVF) threads the bilayer. Topologically, residues 163-185 (HKVISLNCKYSEHHGFLASVYQH) are extracellular. Residues 186 to 204 (NIFFLLSMGIILFCYVQIL) form a helical membrane-spanning segment. At 205–220 (RTLFRTRSRQRHRTVR) the chain is on the cytoplasmic side. The helical transmembrane segment at 221–243 (LIFTVVVAYFLSWAPYNLTLFLK) threads the bilayer. Residues 244-259 (TGIIQQSCESLQQLDI) are Extracellular-facing. The chain crosses the membrane as a helical span at residues 260-283 (AMIICRHLAFSHCCFNPVLYVFVG). At 284-322 (IKFRRHLKHLFQQVWLCRKTSSTVPCSPGTFTYEGPSFY) the chain is on the cytoplasmic side.

It belongs to the G-protein coupled receptor 1 family. Expressed by dendritic cells from the thymus, slpeen, subcutaneous lymph nodes and mesenteric lymph nodes.

The protein localises to the cell membrane. Its function is as follows. Receptor for chemokines SCYC1 and SCYC2. Subsequently transduces a signal by increasing the intracellular calcium ions level. Receptor for XCL1/Lymphotactin. The chain is Chemokine XC receptor 1 (Xcr1) from Mus musculus (Mouse).